The primary structure comprises 193 residues: Ion-translocating oxidoreductase complex subunit A (193 aa).

6 consecutive transmembrane segments (helical) span residues 5–25 (LLLL…FLGL), 39–59 (IGMG…SYLM), 63–83 (ILIP…VIAV), 102–122 (LLGI…VALL), 134–154 (IIYG…FAAM), and 171–191 (SIAM…TGLI).

This sequence belongs to the NqrDE/RnfAE family. As to quaternary structure, the complex is composed of six subunits: RnfA, RnfB, RnfC, RnfD, RnfE and RnfG.

It localises to the cell inner membrane. Functionally, part of a membrane-bound complex that couples electron transfer with translocation of ions across the membrane. The polypeptide is Ion-translocating oxidoreductase complex subunit A (Aeromonas hydrophila subsp. hydrophila (strain ATCC 7966 / DSM 30187 / BCRC 13018 / CCUG 14551 / JCM 1027 / KCTC 2358 / NCIMB 9240 / NCTC 8049)).